Reading from the N-terminus, the 234-residue chain is Sugar fermentation stimulation protein homolog (234 aa).

This sequence belongs to the SfsA family.

The chain is Sugar fermentation stimulation protein homolog from Shewanella putrefaciens (strain CN-32 / ATCC BAA-453).